The primary structure comprises 348 residues: Glycerol-1-phosphate dehydrogenase [NAD(P)+] (348 aa).

NAD(+)-binding positions include 94-98 (GKVID) and threonine 116. A substrate-binding site is contributed by aspartate 121. An NAD(+)-binding site is contributed by serine 125. Aspartate 168 contacts substrate. Residues aspartate 168 and histidine 248 each contribute to the Zn(2+) site. Histidine 252 serves as a coordination point for substrate. Histidine 264 provides a ligand contact to Zn(2+).

This sequence belongs to the glycerol-1-phosphate dehydrogenase family. As to quaternary structure, homooctamer. Requires Zn(2+) as cofactor.

It is found in the cytoplasm. The enzyme catalyses sn-glycerol 1-phosphate + NAD(+) = dihydroxyacetone phosphate + NADH + H(+). It carries out the reaction sn-glycerol 1-phosphate + NADP(+) = dihydroxyacetone phosphate + NADPH + H(+). Its pathway is membrane lipid metabolism; glycerophospholipid metabolism. Its function is as follows. Catalyzes the NAD(P)H-dependent reduction of dihydroxyacetonephosphate (DHAP or glycerone phosphate) to glycerol 1-phosphate (G1P). The G1P thus generated is used as the glycerophosphate backbone of phospholipids in the cellular membranes of Archaea. The protein is Glycerol-1-phosphate dehydrogenase [NAD(P)+] of Methanosphaera stadtmanae (strain ATCC 43021 / DSM 3091 / JCM 11832 / MCB-3).